A 211-amino-acid polypeptide reads, in one-letter code: MRLTAKQVTWLKVCLHLAGLLPFLWLAWAINHGGLGADPVKDIQHFTGRTALKFLLATLLITPLARYAKQPLLIRTRRLLGLWCFAWATLHLTSYALLELGVNNLALLGKELITRPYLTLGIISWVILLALAFTSTQAMQRKLGKHWQQLHNFVYLVAILAPIHYLWSVKIISPQPLIYAGLAVLLLALRYKKLLSLFNQLRKQVHNKLSL.

A run of 5 helical transmembrane segments spans residues 10–30 (WLKVCLHLAGLLPFLWLAWAI), 82–102 (LWCFAWATLHLTSYALLELGV), 116–136 (PYLTLGIISWVILLALAFTST), 153–173 (FVYLVAILAPIHYLWSVKIIS), and 178–198 (IYAGLAVLLLALRYKKLLSLF).

This sequence belongs to the MsrQ family. As to quaternary structure, heterodimer of a catalytic subunit (MsrP) and a heme-binding subunit (MsrQ). FMN is required as a cofactor. The cofactor is heme b.

The protein localises to the cell inner membrane. Part of the MsrPQ system that repairs oxidized periplasmic proteins containing methionine sulfoxide residues (Met-O), using respiratory chain electrons. Thus protects these proteins from oxidative-stress damage caused by reactive species of oxygen and chlorine generated by the host defense mechanisms. MsrPQ is essential for the maintenance of envelope integrity under bleach stress, rescuing a wide series of structurally unrelated periplasmic proteins from methionine oxidation, including the primary periplasmic chaperone SurA and the lipoprotein Pal. MsrQ provides electrons for reduction to the reductase catalytic subunit MsrP, using the quinone pool of the respiratory chain. In Escherichia coli (strain UTI89 / UPEC), this protein is Protein-methionine-sulfoxide reductase heme-binding subunit MsrQ.